The sequence spans 369 residues: Somatostatin receptor type 2 (369 aa).

Topologically, residues 1 to 43 are extracellular; it reads MEMSSEQLNGSQVWVSSPFDLNGSLGPSNGSNQTEPYYDMTSN. 4 N-linked (GlcNAc...) asparagine glycosylation sites follow: Asn9, Asn22, Asn29, and Asn32. A helical membrane pass occupies residues 44–67; sequence AVLTFIYFVVCVVGLCGNTLVIYV. Over 68 to 78 the chain is Cytoplasmic; that stretch reads ILRYAKMKTIT. Residues 79–103 form a helical membrane-spanning segment; that stretch reads NIYILNLAIADELFMLGLPFLAMQV. The Extracellular portion of the chain corresponds to 104–118; it reads ALVHWPFGKAICRVV. Residues Cys115 and Cys193 are joined by a disulfide bond. Residues 119–138 traverse the membrane as a helical segment; that stretch reads MTVDGINQFTSIFCLTVMSI. Residues 139 to 161 lie on the Cytoplasmic side of the membrane; the sequence is DRYLAVVHPIKSAKWRRPRTAKM. A helical membrane pass occupies residues 162–181; the sequence is INVAVWCVSLLVILPIMIYA. The Extracellular portion of the chain corresponds to 182–207; the sequence is GLRSNQWGRSSCTINWPGESGAWYTG. A helical transmembrane segment spans residues 208–229; the sequence is FIIYAFILGFLVPLTIICLCYL. At 230-253 the chain is on the cytoplasmic side; sequence FIIIKVKSSGIRVGSSKRKKSEKK. The helical transmembrane segment at 254–278 threads the bilayer; sequence VTRMVSIVVAVFIFCWLPFYIFNVS. At 279 to 288 the chain is on the extracellular side; that stretch reads SVSVAISPTP. Residues 289–303 traverse the membrane as a helical segment; the sequence is ALKGMFDFVVILTYA. Residues 304-369 lie on the Cytoplasmic side of the membrane; the sequence is NSCANPILYA…LLNGDLQTSI (66 aa). The S-palmitoyl cysteine moiety is linked to residue Cys328. Phosphoserine occurs at positions 341, 343, and 348. Phosphothreonine occurs at positions 353 and 354.

The protein belongs to the G-protein coupled receptor 1 family. As to quaternary structure, homodimer and heterodimer with SSTR3 and SSTR5. Heterodimerization with SSTR3 inactivates SSTR3 receptor function. Heterodimerization with SSTR5 is enhanced by agonist stimulation of SSTR2 and increases SSTR2 cell growth inhibition activity. Following agonist stimulation, homodimers dissociate into monomers which is required for receptor internalization. Interacts with beta-arrestin; this interaction is necessary for receptor internalization and is destabilized by heterodimerization with SSTR5 which results in increased recycling of SSTR2 to the cell surface. Interacts (via C-terminus) with SHANK1 (via PDZ domain). In terms of processing, phosphorylated on serine and threonine residues in response to agonist stimulation, leading to receptor desensitization and rapid internalization. Phosphorylated to a greater extent on serine than threonine residues. Threonine phosphorylation is required for arrestin binding and receptor endocytosis but is not necessary for desensitization. In terms of tissue distribution, cerebrum and kidney.

It is found in the cell membrane. It localises to the cytoplasm. Receptor for somatostatin-14 and -28. This receptor is coupled via pertussis toxin sensitive G proteins to inhibition of adenylyl cyclase. In addition it stimulates phosphotyrosine phosphatase and PLC via pertussis toxin insensitive as well as sensitive G proteins. Inhibits calcium entry by suppressing voltage-dependent calcium channels. Acts as the functionally dominant somatostatin receptor in pancreatic alpha- and beta-cells where it mediates the inhibitory effect of somatostatin-14 on hormone secretion. Inhibits cell growth through enhancement of MAPK1 and MAPK2 phosphorylation and subsequent up-regulation of CDKN1B. Stimulates neuronal migration and axon outgrowth and may participate in neuron development and maturation during brain development. Mediates negative regulation of insulin receptor signaling through PTPN6. Inactivates SSTR3 receptor function following heterodimerization. The polypeptide is Somatostatin receptor type 2 (Sstr2) (Mus musculus (Mouse)).